A 600-amino-acid chain; its full sequence is Probable methyltransferase PMT7 (600 aa).

Residues 1–15 (MGGGYVLFGSARSGQ) are Cytoplasmic-facing. The helical; Signal-anchor for type II membrane protein transmembrane segment at 16 to 36 (MIMVALVLMVGSFYAGSIFGN) threads the bilayer. At 37 to 600 (NSPIYISQPS…FCRKKFWAIL (564 aa)) the chain is on the lumenal side. Asparagine 49, asparagine 98, asparagine 110, asparagine 157, asparagine 200, asparagine 204, asparagine 334, asparagine 447, and asparagine 484 each carry an N-linked (GlcNAc...) asparagine glycan.

The protein belongs to the methyltransferase superfamily.

The protein resides in the golgi apparatus membrane. The polypeptide is Probable methyltransferase PMT7 (Arabidopsis thaliana (Mouse-ear cress)).